We begin with the raw amino-acid sequence, 6199 residues long: Adhesion G-protein coupled receptor V1 (6199 aa).

Residues 1–23 form the signal peptide; that stretch reads MPAVLALSGLLLMLLTVSVRSES. 21 consecutive Calx-beta domains span residues 24–109, 126–230, 249–355, 380–480, 637–737, 753–853, 869–972, 997–1083, 1099–1199, 1434–1534, 1563–1655, 1835–1937, 1963–2063, 2092–2190, 2208–2308, 2425–2525, 2582–2659, 2673–2773, 2814–2908, 2931–3029, and 3054–3154; these read AELR…VFIL, ATIT…VQLT, ISRN…QVVL, DKPY…LKLI, PDIA…ILTL, SREI…VVLS, NITV…ITLL, IYFA…YIVL, TVVI…LRLM, PIPG…FYLQ, GLFS…RVRL, IIVT…VRLT, LFVF…FLEL, QVII…RIEL, ITIL…KVEL, AAFC…FIIK, VREE…QIGL, DTVT…RVIL, PSSL…LVNI, EIII…QLIL, and GHGI…TVTL. The Extracellular segment spans residues 24 to 5803; the sequence is AELRFQGQTQ…IESLASFNEA (5780 aa). EAR repeat units lie at residues 3239–3284, 3285–3333, 3336–3372, 3374–3420, 3422–3467, and 3471–3513; these read VLAV…KWQG, VFVP…RVQA, NLTLEQTFSVSGFSVKHFSTDLKQYLIASSEIFVWNR, SFFL…QWTD, RFQN…LWGS, and VFQQ…SWRS. 13 consecutive Calx-beta domains span residues 3562–3605, 3619–3719, 3778–3854, 3916–3985, 4000–4103, 4120–4220, 4247–4335, 4371–4471, 4493–4593, 4615–4715, 4993–5076, 5125–5225, and 5260–5360; these read SNQS…RVSL, QVTF…TIVL, ITLS…FVNI, VLRL…MVKL, VVVS…IQLL, VVIR…QLRL, HGLF…FLNI, VIIQ…LQLT, DSPN…IIML, KFGD…TLRL, QHLV…VNLT, SEDS…IYLS, and VGFS…LVEV. The GAIN-B domain maps to 5636 to 5801; sequence PYFTIAAHHW…AEIESLASFN (166 aa). 2 cysteine pairs are disulfide-bonded: Cys-5751–Cys-5780 and Cys-5768–Cys-5782. A GPS region spans residues 5751 to 5801; sequence CLLWNQAAESWLSDGQFCRLVDDTQNYVECACSHLSIYTAYAEIESLASFN. A helical transmembrane segment spans residues 5804–5824; sequence FYAAGFICISGFALAMVSHLM. Residues 5825–5834 are Cytoplasmic-facing; it reads CARFLMFAAK. The chain crosses the membrane as a helical span at residues 5835–5855; it reads LLTHMMVACLGTQICFLVSAF. The Extracellular portion of the chain corresponds to 5856–5864; that stretch reads RGRMFSEDS. A helical membrane pass occupies residues 5865-5885; the sequence is CAALGLFFHYFHLSQFGWMLV. Topologically, residues 5886–5908 are cytoplasmic; sequence QAINFWQILVMNDEHTERRYLLY. Residues 5909–5929 form a helical membrane-spanning segment; sequence FLLSWGLPALVIIVLVVVLLG. Over 5930–5954 the chain is Extracellular; that stretch reads GFGWSIHSVYGLVQGDLCFIPNVYA. The chain crosses the membrane as a helical span at residues 5955-5975; sequence ALCTAALVPLICLVGVLVIFI. Residues 5976–6001 lie on the Cytoplasmic side of the membrane; the sequence is HAYQVTQQWKAYDDIYRGRTNSSEVP. Residues 6002 to 6022 traverse the membrane as a helical segment; sequence MMLYLFALVTLVCVWAGLHMA. Over 6023 to 6025 the chain is Extracellular; it reads YRY. The helical transmembrane segment at 6026–6046 threads the bilayer; the sequence is IWMLILLVIFNIFLGLYVFSV. Residues 6047 to 6199 lie on the Cytoplasmic side of the membrane; sequence YFVMHNQLFW…RRIPIADTHL (153 aa).

It belongs to the G-protein coupled receptor 2 family. Adhesion G-protein coupled receptor (ADGR) subfamily. Heterodimer of 2 chains generated by proteolytic processing; the large extracellular N-terminal fragment and the membrane-bound C-terminal fragment predominantly remain associated and non-covalently linked. In terms of processing, autoproteolytically processed at the GPS region of the GAIN-B domain; this cleavage modulates receptor activity.

The protein resides in the cell membrane. Its subcellular location is the cell projection. It localises to the stereocilium membrane. The protein localises to the photoreceptor inner segment. Its function is as follows. Receptor that may have an important role in the development of the sensory nervous system. The protein is Adhesion G-protein coupled receptor V1 (adgrv1) of Danio rerio (Zebrafish).